A 254-amino-acid chain; its full sequence is Acetylglutamate kinase (254 aa).

Substrate contacts are provided by residues 40–41 (GG), arginine 62, and asparagine 154.

The protein belongs to the acetylglutamate kinase family. ArgB subfamily.

Its subcellular location is the cytoplasm. The enzyme catalyses N-acetyl-L-glutamate + ATP = N-acetyl-L-glutamyl 5-phosphate + ADP. It functions in the pathway amino-acid biosynthesis; L-arginine biosynthesis; N(2)-acetyl-L-ornithine from L-glutamate: step 2/4. Catalyzes the ATP-dependent phosphorylation of N-acetyl-L-glutamate. This chain is Acetylglutamate kinase, found in Staphylococcus aureus (strain Mu3 / ATCC 700698).